Reading from the N-terminus, the 458-residue chain is ATP synthase subunit beta (458 aa).

Position 148-155 (148-155 (GGAGVGKT)) interacts with ATP.

This sequence belongs to the ATPase alpha/beta chains family. As to quaternary structure, F-type ATPases have 2 components, CF(1) - the catalytic core - and CF(0) - the membrane proton channel. CF(1) has five subunits: alpha(3), beta(3), gamma(1), delta(1), epsilon(1). CF(0) has three main subunits: a(1), b(2) and c(9-12). The alpha and beta chains form an alternating ring which encloses part of the gamma chain. CF(1) is attached to CF(0) by a central stalk formed by the gamma and epsilon chains, while a peripheral stalk is formed by the delta and b chains.

The protein localises to the cell inner membrane. The catalysed reaction is ATP + H2O + 4 H(+)(in) = ADP + phosphate + 5 H(+)(out). In terms of biological role, produces ATP from ADP in the presence of a proton gradient across the membrane. The catalytic sites are hosted primarily by the beta subunits. This chain is ATP synthase subunit beta, found in Nitrosococcus oceani (strain ATCC 19707 / BCRC 17464 / JCM 30415 / NCIMB 11848 / C-107).